We begin with the raw amino-acid sequence, 427 residues long: Trigger factor (427 aa).

The region spanning 163-248 is the PPIase FKBP-type domain; it reads GDVVNLDFDG…INEVKSKEVP (86 aa).

It belongs to the FKBP-type PPIase family. Tig subfamily.

The protein resides in the cytoplasm. The catalysed reaction is [protein]-peptidylproline (omega=180) = [protein]-peptidylproline (omega=0). In terms of biological role, involved in protein export. Acts as a chaperone by maintaining the newly synthesized protein in an open conformation. Functions as a peptidyl-prolyl cis-trans isomerase. The chain is Trigger factor from Macrococcus caseolyticus (strain JCSC5402) (Macrococcoides caseolyticum).